The following is a 206-amino-acid chain: N-(5'-phosphoribosyl)anthranilate isomerase (206 aa).

It belongs to the TrpF family.

It carries out the reaction N-(5-phospho-beta-D-ribosyl)anthranilate = 1-(2-carboxyphenylamino)-1-deoxy-D-ribulose 5-phosphate. The protein operates within amino-acid biosynthesis; L-tryptophan biosynthesis; L-tryptophan from chorismate: step 3/5. The polypeptide is N-(5'-phosphoribosyl)anthranilate isomerase (Pseudomonas putida (strain ATCC 47054 / DSM 6125 / CFBP 8728 / NCIMB 11950 / KT2440)).